A 183-amino-acid chain; its full sequence is GTP cyclohydrolase 1 (183 aa).

3 residues coordinate Zn(2+): Cys-71, His-74, and Cys-142.

Belongs to the GTP cyclohydrolase I family. In terms of assembly, toroid-shaped homodecamer, composed of two pentamers of five dimers.

The enzyme catalyses GTP + H2O = 7,8-dihydroneopterin 3'-triphosphate + formate + H(+). It participates in cofactor biosynthesis; 7,8-dihydroneopterin triphosphate biosynthesis; 7,8-dihydroneopterin triphosphate from GTP: step 1/1. This is GTP cyclohydrolase 1 from Leptospira borgpetersenii serovar Hardjo-bovis (strain JB197).